Consider the following 135-residue polypeptide: Interleukin-4 (135 aa).

Positions 1 to 24 (MGLTSQLIPALVCLLVCTSHFVHG) are cleaved as a signal peptide. 2 disulfide bridges follow: C48–C85 and C70–C105. N62 and N96 each carry an N-linked (GlcNAc...) asparagine glycan.

This sequence belongs to the IL-4/IL-13 family.

It localises to the secreted. Its function is as follows. Participates in at least several B-cell activation processes as well as of other cell types. It is a costimulator of DNA-synthesis. It induces the expression of class II MHC molecules on resting B-cells. It enhances both secretion and cell surface expression of IgE and IgG1. It also regulates the expression of the low affinity Fc receptor for IgE (CD23) on both lymphocytes and monocytes. Positively regulates IL31RA expression in macrophages. Stimulates autophagy in dendritic cells by interfering with mTORC1 signaling and through the induction of RUFY4. This chain is Interleukin-4 (IL4), found in Ovis aries (Sheep).